Here is a 100-residue protein sequence, read N- to C-terminus: NADH-quinone oxidoreductase subunit K (100 aa).

3 consecutive transmembrane segments (helical) span residues 4–24 (TSYY…GVLI), 29–49 (LVLF…LVTF), and 60–80 (IVVF…LALL).

Belongs to the complex I subunit 4L family. NDH-1 is composed of 14 different subunits. Subunits NuoA, H, J, K, L, M, N constitute the membrane sector of the complex.

It localises to the cell membrane. The enzyme catalyses a quinone + NADH + 5 H(+)(in) = a quinol + NAD(+) + 4 H(+)(out). Functionally, NDH-1 shuttles electrons from NADH, via FMN and iron-sulfur (Fe-S) centers, to quinones in the respiratory chain. The immediate electron acceptor for the enzyme in this species is believed to be ubiquinone. Couples the redox reaction to proton translocation (for every two electrons transferred, four hydrogen ions are translocated across the cytoplasmic membrane), and thus conserves the redox energy in a proton gradient. This is NADH-quinone oxidoreductase subunit K from Roseiflexus sp. (strain RS-1).